The following is a 116-amino-acid chain: NADH-quinone oxidoreductase subunit A (116 aa).

The next 3 membrane-spanning stretches (helical) occupy residues 3-23 (FTLL…VIAL), 61-81 (FAIL…WAVI), and 88-108 (QGLI…AYAW).

It belongs to the complex I subunit 3 family. In terms of assembly, NDH-1 is composed of 14 different subunits. Subunits NuoA, H, J, K, L, M, N constitute the membrane sector of the complex.

The protein localises to the cell inner membrane. It carries out the reaction a quinone + NADH + 5 H(+)(in) = a quinol + NAD(+) + 4 H(+)(out). In terms of biological role, NDH-1 shuttles electrons from NADH, via FMN and iron-sulfur (Fe-S) centers, to quinones in the respiratory chain. The immediate electron acceptor for the enzyme in this species is believed to be a menaquinone. Couples the redox reaction to proton translocation (for every two electrons transferred, four hydrogen ions are translocated across the cytoplasmic membrane), and thus conserves the redox energy in a proton gradient. The sequence is that of NADH-quinone oxidoreductase subunit A from Bacteroides fragilis (strain ATCC 25285 / DSM 2151 / CCUG 4856 / JCM 11019 / LMG 10263 / NCTC 9343 / Onslow / VPI 2553 / EN-2).